Consider the following 397-residue polypeptide: Ubiquitin-like modifier-activating enzyme 5 (397 aa).

ATP-binding residues include glycine 77, aspartate 98, lysine 121, asparagine 144, and asparagine 178. 2 residues coordinate Zn(2+): cysteine 220 and cysteine 223. Cysteine 244 serves as the catalytic Glycyl thioester intermediate. Zn(2+)-binding residues include cysteine 297 and cysteine 302. The short motif at valine 329–valine 341 is the UFM1-interacting sequence (UIS) element. The segment at serine 342–threonine 372 is linker. The short motif at aspartate 382–leucine 397 is the UFC1-binding sequence (UFC) element.

The protein belongs to the ubiquitin-activating E1 family. UBA5 subfamily. As to quaternary structure, homodimer; homodimerization is required for ufm1 activation. Interacts (via UIS motif) with ufm1; binds ufm1 via a trans-binding mechanism in which ufm1 interacts with distinct sites in both subunits of the uba5 homodimer. Interacts (via C-terminus) with ufc1.

The protein localises to the cytoplasm. It localises to the nucleus. It is found in the endoplasmic reticulum membrane. The protein resides in the golgi apparatus. Its function is as follows. E1-like enzyme which specifically catalyzes the first step in ufmylation. Activates ufm1 by first adenylating its C-terminal glycine residue with ATP, and thereafter linking this residue to the side chain of a cysteine residue in E1, yielding a ufm1-E1 thioester and free AMP. Activates ufm1 via a trans-binding mechanism, in which ufm1 interacts with distinct sites in both subunits of the uba5 homodimer. Trans-binding also promotes stabilization of the uba5 homodimer, and enhances ATP-binding. Transfer of ufm1 from uba5 to the E2-like enzyme UFC1 also takes place using a trans mechanism. Ufmylation plays a key role in various processes, such as ribosome recycling, response to DNA damage, interferon response or reticulophagy (also called ER-phagy). The chain is Ubiquitin-like modifier-activating enzyme 5 from Xenopus laevis (African clawed frog).